Reading from the N-terminus, the 394-residue chain is Metal tolerance protein 11 (394 aa).

At Met1–Thr103 the chain is on the cytoplasmic side. The helical transmembrane segment at Leu104–Ser124 threads the bilayer. At Val125–Leu130 the chain is on the vacuolar side. Residues Ala131 to Phe151 form a helical membrane-spanning segment. Topologically, residues Thr152–Gln172 are cytoplasmic. A helical membrane pass occupies residues Pro173 to Glu193. Topologically, residues Ser194–Glu212 are vacuolar. Residues Ser213 to Cys233 form a helical membrane-spanning segment. The Cytoplasmic segment spans residues Arg234 to Asp251. A helical membrane pass occupies residues Val252–Ile272. Position 273 (Asp273) is a topological domain, vacuolar. A helical transmembrane segment spans residues Pro274–Glu294. Topologically, residues Asn295–Cys394 are cytoplasmic.

The protein belongs to the cation diffusion facilitator (CDF) transporter (TC 2.A.4) family. SLC30A subfamily. Widely expressed.

The protein localises to the prevacuolar compartment membrane. Its subcellular location is the golgi apparatus membrane. Its function is as follows. Cation/proton antiporter involved in endogenous manganese tolerance probably through vesicular trafficking and exocytosis. The polypeptide is Metal tolerance protein 11 (MTP11) (Arabidopsis thaliana (Mouse-ear cress)).